Here is a 393-residue protein sequence, read N- to C-terminus: NAD(P)H-quinone oxidoreductase subunit H, chloroplastic (393 aa).

Belongs to the complex I 49 kDa subunit family. As to quaternary structure, NDH is composed of at least 16 different subunits, 5 of which are encoded in the nucleus.

Its subcellular location is the plastid. It is found in the chloroplast thylakoid membrane. The enzyme catalyses a plastoquinone + NADH + (n+1) H(+)(in) = a plastoquinol + NAD(+) + n H(+)(out). The catalysed reaction is a plastoquinone + NADPH + (n+1) H(+)(in) = a plastoquinol + NADP(+) + n H(+)(out). NDH shuttles electrons from NAD(P)H:plastoquinone, via FMN and iron-sulfur (Fe-S) centers, to quinones in the photosynthetic chain and possibly in a chloroplast respiratory chain. The immediate electron acceptor for the enzyme in this species is believed to be plastoquinone. Couples the redox reaction to proton translocation, and thus conserves the redox energy in a proton gradient. The polypeptide is NAD(P)H-quinone oxidoreductase subunit H, chloroplastic (Oenothera biennis (German evening primrose)).